Here is a 222-residue protein sequence, read N- to C-terminus: UPF0758 protein YicR (222 aa).

The region spanning 100-222 (PLLSPEMTRE…YVSFAERGWI (123 aa)) is the MPN domain. Zn(2+) is bound by residues histidine 171, histidine 173, and aspartate 184. The JAMM motif motif lies at 171-184 (HNHPSGCAEPSKAD).

It belongs to the UPF0758 family. YicR subfamily.

The sequence is that of UPF0758 protein YicR from Escherichia coli (strain 55989 / EAEC).